A 403-amino-acid polypeptide reads, in one-letter code: Tetratricopeptide repeat protein 19, mitochondrial (403 aa).

The transit peptide at 1-67 (MALRSYCRQL…WHRRSWHRCA (67 aa)) directs the protein to the mitochondrion. TPR repeat units lie at residues 154–187 (IYTY…MLSG), 297–330 (LVLM…GQAA), and 336–369 (HVLL…AHTA).

It belongs to the TTC19 family. Binds to the mature mitochondrial complex III dimer, after the incorporation of the Rieske protein (UQCRFS1). Interacts with UQCRC1 and UQCRFS1. Interacts with ZFYVE26 and CHMP4B.

It is found in the mitochondrion inner membrane. Its function is as follows. Required for the preservation of the structural and functional integrity of mitochondrial respiratory complex III by allowing the physiological turnover of the Rieske protein UQCRFS1. Involved in the clearance of UQCRFS1 N-terminal fragments, which are produced upon incorporation into the complex III and whose presence is detrimental for its catalytic activity. In Danio rerio (Zebrafish), this protein is Tetratricopeptide repeat protein 19, mitochondrial (ttc19).